The primary structure comprises 178 residues: Disulfide bond formation protein B (178 aa).

Over 1–16 the chain is Cytoplasmic; sequence MTIFSSLNQFSKGHVS. A helical transmembrane segment spans residues 17 to 33; that stretch reads WLLLLLFIIFFEACALY. Topologically, residues 34 to 51 are periplasmic; the sequence is FQHVMMLAPCVMCIYERV. A disulfide bridge links cysteine 43 with cysteine 46. Residues 52–67 form a helical membrane-spanning segment; it reads AMMGIGGAAIIGLIAP. The Cytoplasmic segment spans residues 68 to 74; that stretch reads NNALFRW. Residues 75–92 traverse the membrane as a helical segment; the sequence is LGLIGWGLSSYKGLMLAM. The Periplasmic portion of the chain corresponds to 93–147; that stretch reads QHVDYQFNPSPFATCDLFVTFPSWAPLNQWVPWMFEAYGDCSKIVWQFFDLSMPQ. An intrachain disulfide couples cysteine 107 to cysteine 133. The chain crosses the membrane as a helical span at residues 148–166; it reads WLVVIFAGNLVALALIVIA. Residues 167 to 178 lie on the Cytoplasmic side of the membrane; it reads QFFPVKRKNPIR.

The protein belongs to the DsbB family.

It localises to the cell inner membrane. In terms of biological role, required for disulfide bond formation in some periplasmic proteins. Acts by oxidizing the DsbA protein. The chain is Disulfide bond formation protein B from Vibrio parahaemolyticus serotype O3:K6 (strain RIMD 2210633).